A 118-amino-acid polypeptide reads, in one-letter code: Nitrogenase-stabilizing/protective protein NifW (118 aa).

Belongs to the NifW family. Homotrimer; associates with NifD.

May protect the nitrogenase Fe-Mo protein from oxidative damage. In Rhodopseudomonas palustris (strain BisB5), this protein is Nitrogenase-stabilizing/protective protein NifW.